Reading from the N-terminus, the 402-residue chain is MAQDRKKVLVLGAGYAGLQTVTKLQKELSADAAEITLINKNEYHYESTWLHEASAGTINYEDLLYPVEKTVNKNKVNFVVAEVTKIDRNAKRVETDKGVYDFDILVVALGFVSETFGIDGMKEHAFQIENVLTSRKLSRHIEDKFANYAASKEKDDKDLSILVGGAGFTGIEFLGELTDRIPELCSKYGVDQSKVKLTCVEAAPKMLPMFSDDLVSYAVKYLEDRGVEFKIATPIVACNEKGFVVEVNGEKQQLEAGTSVWTAGVRGSHLMEESFEGVKRGRIINKQDLTIEGHNDIFVIGDCSAFIPADEERPLPTTAQIAMQQGEHTASNIKRLLNGESTQDFQYVNRGTVCSLGANDGVGIVYGRDIAGKKAAFLKKVIDTRAIYKLGGIGLAFKKGKF.

FAD contacts are provided by residues 12–16 (GAGYA), 39–40 (NK), and Val-83. Glu-172 is a catalytic residue. Residues Asp-302, 319–320 (AQ), and Lys-379 each bind FAD.

This sequence belongs to the NADH dehydrogenase family. Requires FAD as cofactor.

The protein resides in the cell membrane. The enzyme catalyses a quinone + NADH + H(+) = a quinol + NAD(+). In terms of biological role, alternative, nonproton pumping NADH:quinone oxidoreductase that delivers electrons to the respiratory chain by oxidation of NADH and reduction of quinones, and contributes to the regeneration of NAD(+). This is Type II NADH:quinone oxidoreductase from Staphylococcus epidermidis (strain ATCC 12228 / FDA PCI 1200).